A 193-amino-acid polypeptide reads, in one-letter code: Rho-related protein racB (193 aa).

Positions 13, 15, 16, 17, 18, 32, 35, 60, 116, 118, and 159 each coordinate GTP. Residue Thr-17 coordinates Mg(2+). 2 short sequence motifs (switch) span residues 26-37 (NAFPTEYVPTVF) and 57-75 (DTAGQEDYDRIRPLSYPQT). Thr-35 contributes to the Mg(2+) binding site. Cys-190 carries the post-translational modification Cysteine methyl ester. Residue Cys-190 is the site of S-geranylgeranyl cysteine attachment. Residues 191–193 (LIF) constitute a propeptide, removed in mature form.

The protein belongs to the small GTPase superfamily. Rho family. Mg(2+) is required as a cofactor.

The protein localises to the cell membrane. Its subcellular location is the cytoplasm. It localises to the cytoskeleton. It carries out the reaction GTP + H2O = GDP + phosphate + H(+). Its activity is regulated as follows. Regulated by guanine nucleotide exchange factors (GEFs) which promote the exchange of bound GDP for free GTP, GTPase activating proteins (GAPs) which increase the GTP hydrolysis activity, and GDP dissociation inhibitors which inhibit the dissociation of the nucleotide from the GTPase. In terms of biological role, small GTPase which cycles between active GTP-bound and inactive GDP-bound states. This Entamoeba histolytica (strain ATCC 30459 / HM-1:IMSS / ABRM) protein is Rho-related protein racB.